We begin with the raw amino-acid sequence, 312 residues long: Elongation factor Ts (312 aa).

Residues 84–87 (TDFL) are involved in Mg(2+) ion dislocation from EF-Tu.

Belongs to the EF-Ts family.

It is found in the cytoplasm. In terms of biological role, associates with the EF-Tu.GDP complex and induces the exchange of GDP to GTP. It remains bound to the aminoacyl-tRNA.EF-Tu.GTP complex up to the GTP hydrolysis stage on the ribosome. The chain is Elongation factor Ts from Caulobacter sp. (strain K31).